The primary structure comprises 254 residues: Imidazole glycerol phosphate synthase subunit HisF (254 aa).

Active-site residues include Asp11 and Asp130.

It belongs to the HisA/HisF family. As to quaternary structure, heterodimer of HisH and HisF.

The protein localises to the cytoplasm. The enzyme catalyses 5-[(5-phospho-1-deoxy-D-ribulos-1-ylimino)methylamino]-1-(5-phospho-beta-D-ribosyl)imidazole-4-carboxamide + L-glutamine = D-erythro-1-(imidazol-4-yl)glycerol 3-phosphate + 5-amino-1-(5-phospho-beta-D-ribosyl)imidazole-4-carboxamide + L-glutamate + H(+). The protein operates within amino-acid biosynthesis; L-histidine biosynthesis; L-histidine from 5-phospho-alpha-D-ribose 1-diphosphate: step 5/9. Functionally, IGPS catalyzes the conversion of PRFAR and glutamine to IGP, AICAR and glutamate. The HisF subunit catalyzes the cyclization activity that produces IGP and AICAR from PRFAR using the ammonia provided by the HisH subunit. This chain is Imidazole glycerol phosphate synthase subunit HisF, found in Microcystis aeruginosa (strain NIES-843 / IAM M-2473).